The sequence spans 215 residues: Extracellular small neutral protease (215 aa).

Positions 1-30 are cleaved as a signal peptide; it reads MRMTRAASALAGLGLAVAAALGSVAPASAA. T152 is a Ca(2+) binding site. Residue H157 participates in Zn(2+) binding. Residue E158 is part of the active site. Zn(2+)-binding residues include H161 and D167. A disulfide bond links C173 and C186.

This sequence belongs to the peptidase M7 family. Requires Zn(2+) as cofactor.

The protein resides in the secreted. It catalyses the reaction Hydrolyzes proteins with a preference for Tyr or Phe in the P1' position. Has no action on amino-acid p-nitroanilides.. This is Extracellular small neutral protease (snpA) from Streptomyces coelicolor.